The primary structure comprises 225 residues: Glutathione S-transferase A (225 aa).

One can recognise a GST N-terminal domain in the interval 3 to 85; sequence KDMTLLWGSG…YLESQFKSQG (83 aa). Arg18 contacts glutathione. The GST C-terminal domain maps to 92–217; that stretch reads CPAEQAMMYQ…WPPTWLESPQ (126 aa).

The protein belongs to the GST superfamily. Theta family. Homodimer. Found in all the tissues examined. Highest values found in liver and in intestinal mucosa.

The protein resides in the cytoplasm. It carries out the reaction RX + glutathione = an S-substituted glutathione + a halide anion + H(+). In terms of biological role, conjugation of reduced glutathione to a wide number of exogenous and endogenous hydrophobic electrophiles. The polypeptide is Glutathione S-transferase A (Pleuronectes platessa (European plaice)).